We begin with the raw amino-acid sequence, 159 residues long: Neuroglobin (159 aa).

A Globin domain is found at Lys3–Ala151. Residues His66 and His98 each coordinate heme b.

This sequence belongs to the globin family. In terms of assembly, monomer. Homodimers and homotetramers. Mainly monomeric but also detected as part of homodimers and homotetramers.

Its subcellular location is the cytoplasm. It is found in the cytosol. The protein localises to the mitochondrion matrix. It catalyses the reaction Fe(III)-heme b-[protein] + nitric oxide + H2O = Fe(II)-heme b-[protein] + nitrite + 2 H(+). Monomeric globin with a bis-histidyl six-coordinate heme-iron atom through which it can bind dioxygen, carbon monoxide and nitric oxide. Could help transport oxygen and increase its availability to the metabolically active neuronal tissues, though its low quantity in tissues as well as its high affinity for dioxygen, which may limit its oxygen-releasing ability, argue against it. The ferrous/deoxygenated form exhibits a nitrite reductase activity and it could produce nitric oxide which in turn inhibits cellular respiration in response to hypoxia. In its ferrous/deoxygenated state, it may also exhibit GDI (Guanine nucleotide Dissociation Inhibitor) activity toward heterotrimeric G-alpha proteins, thereby regulating signal transduction to facilitate neuroprotective responses in the wake of hypoxia and associated oxidative stress. In Dissostichus mawsoni (Antarctic cod), this protein is Neuroglobin (ngb).